Reading from the N-terminus, the 274-residue chain is HTH-type transcriptional regulator GadX (274 aa).

The region spanning 145-242 is the HTH araC/xylS-type domain; it reads TRVCTVINNN…GMTPTEYQER (98 aa). 2 DNA-binding regions (H-T-H motif) span residues 162 to 183 and 209 to 232; these read ARIASELLMSPSLLKKKLREEE and IKRVAVSCGYHSVSYFIYVFRNYY.

Homodimer.

In terms of biological role, positively regulates the expression of about fifteen genes involved in acid resistance such as gadA, gadB and gadC. Depending on the conditions (growth phase and medium), can repress gadW. The protein is HTH-type transcriptional regulator GadX (gadX) of Shigella flexneri.